The sequence spans 246 residues: MAPSLASGPADRIIVALDGMAPEQALRFAAQLDGLRWVKVGLELFVQAGPEVVAQLREQGLRVFLDLKFHDIPATMAGACRRAAALGAELITVHACAGSEALKAAQAAAVEGAQQAGLNPPTLLAVTVLTSWEEQRLQRELAIQQSIGERVPALAQLSATAGIGGCVCSPLEAAALRAQHPEPFALVTPGIRPKGSAVGDQARVMGPAEAIAAGASQLVIGRPITKADDPSAAFAACCTQLLGSID.

Substrate contacts are provided by residues Asp18, Lys39, 66–75, Thr130, Arg192, Gln201, Gly221, and Arg222; that span reads DLKFHDIPAT. Catalysis depends on Lys68, which acts as the Proton donor.

This sequence belongs to the OMP decarboxylase family. Type 1 subfamily. In terms of assembly, homodimer.

The enzyme catalyses orotidine 5'-phosphate + H(+) = UMP + CO2. It participates in pyrimidine metabolism; UMP biosynthesis via de novo pathway; UMP from orotate: step 2/2. Its function is as follows. Catalyzes the decarboxylation of orotidine 5'-monophosphate (OMP) to uridine 5'-monophosphate (UMP). In Parasynechococcus marenigrum (strain WH8102), this protein is Orotidine 5'-phosphate decarboxylase.